A 417-amino-acid chain; its full sequence is MSFPRKFGTAIHAALSFIVFFFLDLLDAILCVVYEFVDEILEENSTGCYCTAAAPQSQTTDENELSSETLFGRRNIFRGMWFLGFAREFKSKLSRKLRKSKIHQESVNRWSDCGCKSCKSWTKNEDGNLHVVVKDSTSREYSVQEPSENVIFIHGFMGSSHFWTETVFEHIQKDDYRLLAIDLLGFGESPKPRDSLYTLKDHVDTIERSVIKPYQLDSFHVVAHSMGCLIALALAAKHSNIVKSVTLVAPPYFPSSVEGSVLNRIARKRLWPPLAFGTAVMSWYEHIGRCVCFIICKHHKIWEWLIKLCIGKREIHWKIKDITRHTHHSAWHSMHNVICGGSKVADEHLETLIKSGVKIHLMQGDCDQIVPSHCSGNMKRTFPAVEVDIITGADHDSMISGRGEEFAEKLESIWCSC.

The N-terminal stretch at 1 to 49 is a signal peptide; sequence MSFPRKFGTAIHAALSFIVFFFLDLLDAILCVVYEFVDEILEENSTGCY. Cysteine 50 carries N-palmitoyl cysteine lipidation. The AB hydrolase-1 domain occupies 150 to 259; sequence VIFIHGFMGS…PPYFPSSVEG (110 aa). Histidine 154 is a catalytic residue. Residue serine 225 is the Nucleophile of the active site. Active-site charge relay system residues include aspartate 367 and histidine 395.

In terms of tissue distribution, expressed in epidermal cells.

The protein resides in the cell membrane. It is found in the secreted. The protein localises to the cell wall. Its function is as follows. Involved in cuticle development and morphogenesis. The sequence is that of Probable lysophospholipase BODYGUARD 4 from Arabidopsis thaliana (Mouse-ear cress).